Reading from the N-terminus, the 802-residue chain is MKFTLSWLKDHLETDASLDEIVERLTSIGLEVEHVDDKSSLKPFVIAKVLTAVQHPDADRLRVLTVDTGDGKSPVQVVCGAPNARAGLIGAFAAPGTYVPGIDVTLTVGKIRGVESHGMMCSERELELSDEHNGIIDLPADAPVGTSFASYAHLDDPVIEINLTPNRPDATSVYGIARDLAASGLGTLKSAAVEKIPGKGETPVKVVIEAPELCPGFALRLVRGVKNGPSPKWLQQRLIAIGLRPISALVDITNYVTFDRGRPLHVFDARKVAGNLVVRRAHDGEKVMALDGREYTLTPDMCAIADDNGVESIAGVMGGEHSGCDENTTDVLIESALWDPITTARTGRTLGIITDARYRFERGVDPEFMVPGVELATRLVLDLCGGEPAETEVVGYAGHKPKIVSFPISEVTRLTGIEVPKEESLDILSRLGFKPQGSSEVVDVALPSWRPDVDGKADLVEEVMRIHGVDNIAPQPLGAHDAVNSKILTTLQVRTRTAKRALAVRGMMEAVTWSFIPAKHAELFGGGQTALKLANPIAADMSDMRPSLLPGLIAAAQRNADKGIGDVALFEVSGTYEGDGADQQRRVAAGVRRGTAKLDGSGRSWAGNSGPVGVFDAKADAIAALEACGAPVERLQIEAGGPAWYHPGRSGTIKLGPKTVLGTFGEFHPKTMEGLDVSGPLCGFEVFVDAVPEPKAKPTKTKPKLELSAFQAVKRDFAFVVDKAVEAGTLVRAALAADKKLITAVSVFDIFEGASLGADKKSIAIEVSIQPVEKTLTDEDFEALAKRVVENVGKQTGGVLRG.

A tRNA-binding domain is found at 38-149 (KSSLKPFVIA…ADAPVGTSFA (112 aa)). The B5 domain maps to 399-474 (HKPKIVSFPI…RIHGVDNIAP (76 aa)). Mg(2+)-binding residues include aspartate 452, aspartate 458, glutamate 461, and glutamate 462. The region spanning 708–801 (SAFQAVKRDF…VGKQTGGVLR (94 aa)) is the FDX-ACB domain.

Belongs to the phenylalanyl-tRNA synthetase beta subunit family. Type 1 subfamily. As to quaternary structure, tetramer of two alpha and two beta subunits. Mg(2+) is required as a cofactor.

The protein resides in the cytoplasm. The catalysed reaction is tRNA(Phe) + L-phenylalanine + ATP = L-phenylalanyl-tRNA(Phe) + AMP + diphosphate + H(+). This Mesorhizobium japonicum (strain LMG 29417 / CECT 9101 / MAFF 303099) (Mesorhizobium loti (strain MAFF 303099)) protein is Phenylalanine--tRNA ligase beta subunit.